The sequence spans 294 residues: Protease HtpX (294 aa).

Transmembrane regions (helical) follow at residues 4–24 (ILLF…ILFI) and 33–53 (FGLI…SLLL). Residue histidine 139 participates in Zn(2+) binding. Glutamate 140 is an active-site residue. Histidine 143 serves as a coordination point for Zn(2+). 2 helical membrane passes run 147-167 (GDMI…IFLS) and 197-217 (FFIS…ITFW). Residue glutamate 223 coordinates Zn(2+).

The protein belongs to the peptidase M48B family. It depends on Zn(2+) as a cofactor.

It is found in the cell membrane. This Wigglesworthia glossinidia brevipalpis protein is Protease HtpX.